Consider the following 703-residue polypeptide: Metastasis-associated protein MTA1 (703 aa).

In terms of domain architecture, BAH spans 1-164 (MAANMYRVGD…PQQKTLLADK (164 aa)). One can recognise an ELM2 domain in the interval 165–276 (GEIRVGNRYQ…KAISALVPQG (112 aa)). Residue Lys-182 forms a Glycyl lysine isopeptide (Lys-Gly) (interchain with G-Cter in ubiquitin) linkage. The SANT domain occupies 283–335 (DEMEEWSASEANLFEEALEKYGKDFTDIQQDFLPWKSLTSIIEYYYMWKTTDR). The residue at position 386 (Ser-386) is a Phosphoserine. The segment at 393–420 (CESCYTTQSYQWYSWGPPNMQCRLCASC) adopts a GATA-type; atypical zinc-finger fold. Residues 437-460 (DGERPGPNRNNMSPHGIPARSSGS) are disordered. Phosphoserine is present on Ser-449. A Glycyl lysine isopeptide (Lys-Gly) (interchain with G-Cter in SUMO2 and SUMO3) cross-link involves residue Lys-509. Residue Ser-522 is modified to Phosphoserine. A compositionally biased stretch (basic and acidic residues) spans 542-552 (ETHPRPPKPDP). The disordered stretch occupies residues 542–583 (ETHPRPPKPDPVKSSSSVLSSLTPAKSAPVINNGSPTILGKR). The short motif at 545–552 (PRPPKPDP) is the SH3-binding element. A Glycyl lysine isopeptide (Lys-Gly) (interchain with G-Cter in SUMO2) cross-link involves residue Lys-549. Low complexity predominate over residues 553–565 (VKSSSSVLSSLTP). Phosphothreonine is present on Thr-564. Ser-576 carries the phosphoserine modification. Thr-578 is modified (phosphothreonine). Lys-614 carries the N6-acetyllysine; alternate modification. Residue Lys-614 forms a Glycyl lysine isopeptide (Lys-Gly) (interchain with G-Cter in ubiquitin); alternate linkage. Ser-627 is subject to Phosphoserine. The segment at 644 to 674 (DVFYMATEETRKIRKLLSSSETKRAARRPYK) is interaction with RBBP4. The interval 661 to 703 (SSSETKRAARRPYKPIALRQSQALPLRPPPPAPVNDEPIVIED) is disordered. The SH3-binding signature appears at 684–693 (LPLRPPPPAP). The SUMO interaction motif 1 (SIM); crucial for efficient sumoylation signature appears at 699–703 (IVIED).

This sequence belongs to the metastasis-associated protein family. Component of the nucleosome remodeling and deacetylase (NuRD) repressor complex, composed of core proteins MTA1, MTA2, MTA3, RBBP4, RBBP7, HDAC1, HDAC2, MBD2, MBD3, and peripherally associated proteins CDK2AP1, CDK2AP2, GATAD2A, GATAD2B, CHD3, CHD4 and CHD5. The exact stoichiometry of the NuRD complex is unknown, and some subunits such as MBD2 and MBD3, GATAD2A and GATAD2B, and CHD3, CHD4 and CHD5 define mutually exclusive NuRD complexes. Interacts with RBBP4; the interaction is direct. Interacts with BMAL1. Interacts with CLOCK. Interacts with COP1. Interacts with CSNK1G2 in the cytoplasm. Interacts with EP300. Interacts with HDAC2. Interacts with ITGB3BP/CENPR. Interacts with MBD3L2. Interacts with MDM2. Interacts with NACC2. Interacts with p53/TP53. Interacts with PIAS1. Interacts with PIAS3. Interacts with PIAS4. Interacts with PWWP2A. Interacts with PWWP2B. Interacts with SENP1. Interacts with SENP2. Interacts with SIX3; facilitates the binding of SIX3 to the core DNA motif of SIX3 promoter. Interacts with SUMO1. Interacts with SUMO2. Interacts with TFCP2L1; which is indispensable for TFCP2L1-mediated self-renewal-promoting effect and endoderm-inhibiting action. Interacts with TFAP2C. Interacts with TPR. Interacts with UBE2I/UBC9. Phosphorylation by CSNK1G2/CK1 triggered by estrogen enhances corepression of estrogen receptor (ER). In terms of processing, acetylation is essential for its transcriptional coactivator activity. Post-translationally, sumoylation positively regulates its transcriptional corepressor activity but does not affect the protein stability. Sumoylated preferentially by SUMO2 or SUMO3 than SUMO1. Sumoylation is enhanced by PIAS1/3/4 and preferentially sumoylated by SUMO2 in the presence of PIAS1/3/4. Desumoylated by SENP1. Ubiquitinated by COP1, which leads to proteasomal degradation. In terms of tissue distribution, isoform 1 abundant in testis and expressed at low levels in brain, heart, lung, liver, and kidney. Isoform 2 abundant in adrenal gland, brain, colon, heart, liver, lung, muscle, prostate, stomach, testis, and thymus and expressed at low levels in duodenum, kidney, pancreas, parotid, and spleen.

It is found in the nucleus. The protein resides in the nucleus envelope. The protein localises to the cytoplasm. Its subcellular location is the cytoskeleton. It localises to the rough endoplasmic reticulum. It is found in the golgi apparatus. The protein resides in the zymogen granule. Functionally, transcriptional coregulator which can act as both a transcriptional corepressor and coactivator. Acts as a component of the histone deacetylase NuRD complex which participates in the remodeling of chromatin. In the NuRD complex, regulates transcription of its targets by modifying the acetylation status of the target chromatin and cofactor accessibility to the target DNA. In conjunction with other components of NuRD, acts as a transcriptional corepressor of BRCA1, ESR1, TFF1 and CDKN1A. Acts as a transcriptional coactivator of BCAS3, and SUMO2, independent of the NuRD complex. Stimulates the expression of WNT1 by inhibiting the expression of its transcriptional corepressor SIX3. Regulates p53-dependent and -independent DNA repair processes following genotoxic stress. Regulates the stability and function of p53/TP53 by inhibiting its ubiquitination by COP1 and MDM2 thereby regulating the p53-dependent DNA repair. Plays a role in the regulation of the circadian clock and is essential for the generation and maintenance of circadian rhythms under constant light and for normal entrainment of behavior to light-dark (LD) cycles. Positively regulates the CLOCK-BMAL1 heterodimer mediated transcriptional activation of its own transcription and the transcription of CRY1. Regulates deacetylation of BMAL1 by regulating SIRT1 expression, resulting in derepressing CRY1-mediated transcription repression. With TFCP2L1, promotes establishment and maintenance of pluripotency in embryonic stem cells (ESCs) and inhibits endoderm differentiation. The sequence is that of Metastasis-associated protein MTA1 (Mta1) from Rattus norvegicus (Rat).